A 610-amino-acid chain; its full sequence is UvrABC system protein C (610 aa).

The GIY-YIG domain maps to 16–94 (SQPGVYRMYD…IKLYQPRYNV (79 aa)). Residues 204–239 (DQVLTQLISRMETASQNLEFEEAARIRDQIQAVRRV) form the UVR domain.

The protein belongs to the UvrC family. As to quaternary structure, interacts with UvrB in an incision complex.

Its subcellular location is the cytoplasm. Functionally, the UvrABC repair system catalyzes the recognition and processing of DNA lesions. UvrC both incises the 5' and 3' sides of the lesion. The N-terminal half is responsible for the 3' incision and the C-terminal half is responsible for the 5' incision. The protein is UvrABC system protein C of Escherichia coli (strain UTI89 / UPEC).